The following is a 391-amino-acid chain: B2 bradykinin receptor (391 aa).

Residues 1–60 (MFSPWKISMFLSVREDSVPTTASFSADMLNVTLQGPTLNGTFAQSKCPQVEWLGWLNTIQ) are Extracellular-facing. Asn30 and Asn39 each carry an N-linked (GlcNAc...) asparagine glycan. The chain crosses the membrane as a helical span at residues 61-84 (PPFLWVLFVLATLENIFVLSVFCL). Over 85 to 93 (HKSSCTVAE) the chain is Cytoplasmic. The chain crosses the membrane as a helical span at residues 94–118 (IYLGNLAAADLILACGLPFWAITIS). Over 119 to 131 (NNFDWLFGETLCR) the chain is Extracellular. Cys130 and Cys211 form a disulfide bridge. A helical membrane pass occupies residues 132-153 (VVNAIISMNLYSSICFLMLVSI). The Cytoplasmic segment spans residues 154 to 175 (DRYLALVKTMSMGRMRGVRWAK). Tyr156 carries the post-translational modification Phosphotyrosine. A helical transmembrane segment spans residues 176–198 (LYSLVIWGCTLLLSSPMLVFRTM). Residues 199-221 (KEYSDEGHNVTACVISYPSLIWE) are Extracellular-facing. Residue Asn207 is glycosylated (N-linked (GlcNAc...) asparagine). A helical membrane pass occupies residues 222-248 (VFTNMLLNVVGFLLPLSVITFCTMQIM). The Cytoplasmic portion of the chain corresponds to 249-267 (QVLRNNEMQKFKEIQTERR). Residues 268–292 (ATVLVLVVLLLFIICWLPFQISTFL) form a helical membrane-spanning segment. Residues 293-311 (DTLHRLGILSSCQDERIID) are Extracellular-facing. The helical transmembrane segment at 312–335 (VITQIASFMAYSNSCLNPLVYVIV) threads the bilayer. The Cytoplasmic segment spans residues 336–391 (GKRFRKKSWEVYQGVCQKGGCRSEPIQMENSMGTLRTSISVERQIHKLQDWAGSRQ). A Phosphotyrosine modification is found at Tyr347. A lipid anchor (S-palmitoyl cysteine) is attached at Cys351. The residue at position 366 (Ser366) is a Phosphoserine. Thr369 carries the post-translational modification Phosphothreonine. 2 positions are modified to phosphoserine; by GRK6: Ser373 and Ser375.

Belongs to the G-protein coupled receptor 1 family. Bradykinin receptor subfamily. BDKRB2 sub-subfamily. As to quaternary structure, forms a complex with PECAM1 and GNAQ. Interacts with PECAM1. In terms of tissue distribution, ubiquitous. Widespread in normal smooth muscle tissue and neurons.

It is found in the cell membrane. Receptor for bradykinin. It is associated with G proteins that activate a phosphatidylinositol-calcium second messenger system. The polypeptide is B2 bradykinin receptor (BDKRB2) (Homo sapiens (Human)).